A 316-amino-acid polypeptide reads, in one-letter code: MCTGLRFTDDQGNLYFGRNLDVGQDYGEGVIITPGNYPLPYKFLDNTTTKKAVIGMGIVVDGYPSYFDCYNEDGLGIAGLNFPHFAKFSDGPIDGKINLASYEIMLWVTQNFTHVSEVKEALKNVNLVNEAINTSFAVAPLHWIISDSDEAIIVEVSKQYGMKVFDDKVGVLTNSPDFNWHLTNLGNYTGLNPHDATAQSWNGQKVAPWGVGTGSLGLPGDSIPADRFVKAAYLNVNYPTAKGEKANVAKFFNILKSVAMIKGSVVNDQGKDEYTVYTACYSSGSKTYYCNFEDDFELKTYKLDDHTMNSTSLVTY.

Cysteine 2 acts as the Nucleophile in catalysis. Deoxycholate contacts are provided by cysteine 2 and arginine 18. Asparagine 81 provides a ligand contact to taurine.

Belongs to the peptidase C59 family.

It catalyses the reaction cholate + taurine = taurocholate + H2O. The catalysed reaction is taurodeoxycholate + H2O = deoxycholate + taurine. The enzyme catalyses taurochenodeoxycholate + H2O = chenodeoxycholate + taurine. It carries out the reaction glycocholate + H2O = cholate + glycine. It participates in lipid metabolism; bile acid biosynthesis. Its activity is regulated as follows. Glycocholate hydrolysis is inhibited by various previously identified BSH inhibitors, including KIO(3), NaHIO(3), NaIO(4), CuCl(2), menadione, riboflavin, gossypetin, and the antibiotics oxytetracycline, demeclocycline hydrochloride and methacycline hydrochloride. Functionally, bile salt hydrolase that catalyzes the deconjugation of glycine- and taurine-linked bile salts, which occurs naturally in the intestines of animals, releasing amino acid residues and deconjugated bile salts (bile acids). Can hydrolyze the amide bond in the bile salts taurocholate (TCA), taurodeoxycholate (TDCA), taurochenodeoxycholate (TCDCA), taurohyodeoxycholate (THDCA) and tauroursodeoxycholate (TUDCA). Oh et al. did not detect activity with the glycine-conjugated bile salts glycocholate (GCA), glycodeoxycholate (GDCA) and glycochenodeoxycholate (GCDCA). However, a later study shows activity toward glycocholate (GCA). This is Conjugated bile acid hydrolase from Lactobacillus acidophilus.